The primary structure comprises 96 residues: Small ribosomal subunit protein bS6 (96 aa).

This sequence belongs to the bacterial ribosomal protein bS6 family.

Its function is as follows. Binds together with bS18 to 16S ribosomal RNA. In Salinispora arenicola (strain CNS-205), this protein is Small ribosomal subunit protein bS6.